A 99-amino-acid polypeptide reads, in one-letter code: Integration host factor subunit alpha (99 aa).

A disordered region spans residues 49-72 (FGNFDLRDKNQRPGRNPKTGEDIP).

Belongs to the bacterial histone-like protein family. As to quaternary structure, heterodimer of an alpha and a beta chain.

In terms of biological role, this protein is one of the two subunits of integration host factor, a specific DNA-binding protein that functions in genetic recombination as well as in transcriptional and translational control. This Escherichia coli O9:H4 (strain HS) protein is Integration host factor subunit alpha.